A 624-amino-acid chain; its full sequence is Leucine-rich repeat, immunoglobulin-like domain and transmembrane domain-containing protein 1 (624 aa).

The N-terminal stretch at 1 to 21 (MWVALGMLWLLALGGPHQAWG) is a signal peptide. Residues 22–59 (FCPSECSCSLRILSDGSKARTVVCSDPDLTLPPASIPP) enclose the LRRNT domain. Topologically, residues 22 to 527 (FCPSECSCSL…EVVDAEGTQR (506 aa)) are lumenal. 5 LRR repeats span residues 60–81 (DTCK…TFRP), 84–105 (RLEQ…MLRG), 108–129 (RLRE…ALRD), 132–153 (QLQL…AAHF), and 156–177 (NLTF…LLDV). Asn-156 carries N-linked (GlcNAc...) asparagine glycosylation. Residues 201 to 254 (NPWVCDCRLYDLVHLLDGWVSSNLIFIEARLRCASPRSLAGVAFSQLELRKCQS) form the LRRCT domain. Residues 267 to 336 (PLGSTVLLRC…YICQAKNFLG (70 aa)) enclose the Ig-like C2-type domain. Cys-276 and Cys-329 form a disulfide bridge. Asn-297 and Asn-456 each carry an N-linked (GlcNAc...) asparagine glycan. The 89-residue stretch at 431 to 519 (MVRSLKVVGD…QCVIFSTDEV (89 aa)) folds into the Fibronectin type-III domain. An LRR 6 repeat occupies 526 to 549 (QRLINMVVISVAAIIALPPTLLVC). A helical transmembrane segment spans residues 528 to 548 (LINMVVISVAAIIALPPTLLV). At 549 to 624 (CCGALRRRCH…GGRRINEYFC (76 aa)) the chain is on the cytoplasmic side.

In terms of assembly, may form a homodimer. Interacts with LRIT2; may form a heterodimer with LRIT2. Interacts (via its N-terminal extracellular domain) with metabotropic glutamate receptor GRM6. Interacts (via its extreme C-terminus) with the scaffold protein FRMPD2 (via the third PDZ domain); the interaction leads to their colocalization in photoreceptor synapses. Expressed predominantly in developing photoreceptor and bipolar cells.

The protein localises to the endoplasmic reticulum membrane. It localises to the cell projection. Its subcellular location is the dendrite. Functionally, photoreceptor synaptic protein essential for normal vision. Involved in synapse formation in cone photoreceptor cells. The chain is Leucine-rich repeat, immunoglobulin-like domain and transmembrane domain-containing protein 1 (Lrit1) from Mus musculus (Mouse).